Here is a 406-residue protein sequence, read N- to C-terminus: 5-methylthioadenosine/S-adenosylhomocysteine deaminase (406 aa).

The Zn(2+) site is built by His55 and His57. The substrate site is built by Glu84, Arg136, Arg148, and His173. Residue His200 participates in Zn(2+) binding. 2 residues coordinate substrate: Glu203 and Asp279. Asp279 is a Zn(2+) binding site.

It belongs to the metallo-dependent hydrolases superfamily. MTA/SAH deaminase family. Zn(2+) is required as a cofactor.

The catalysed reaction is S-adenosyl-L-homocysteine + H2O + H(+) = S-inosyl-L-homocysteine + NH4(+). It catalyses the reaction S-methyl-5'-thioadenosine + H2O + H(+) = S-methyl-5'-thioinosine + NH4(+). Functionally, catalyzes the deamination of 5-methylthioadenosine and S-adenosyl-L-homocysteine into 5-methylthioinosine and S-inosyl-L-homocysteine, respectively. Is also able to deaminate adenosine. Adenosine-5-monophosphate (AMP) and S-adenosyl-L-methionine (SAM) are not enzyme substrates. The chain is 5-methylthioadenosine/S-adenosylhomocysteine deaminase (mtaD) from Thermotoga maritima (strain ATCC 43589 / DSM 3109 / JCM 10099 / NBRC 100826 / MSB8).